Consider the following 118-residue polypeptide: Large ribosomal subunit protein uL18 (118 aa).

The segment at 1–25 is disordered; it reads MISKPDKNKIRQKRHRRVRGKLSGT. The segment covering 10–20 has biased composition (basic residues); sequence IRQKRHRRVRG.

The protein belongs to the universal ribosomal protein uL18 family. As to quaternary structure, part of the 50S ribosomal subunit; part of the 5S rRNA/L5/L18/L25 subcomplex. Contacts the 5S and 23S rRNAs.

This is one of the proteins that bind and probably mediate the attachment of the 5S RNA into the large ribosomal subunit, where it forms part of the central protuberance. In Streptococcus pyogenes serotype M5 (strain Manfredo), this protein is Large ribosomal subunit protein uL18.